A 273-amino-acid chain; its full sequence is Undecaprenyl-diphosphatase (273 aa).

A run of 7 helical transmembrane segments spans residues 6-26 (SLLI…LPVS), 45-65 (AKTF…VMFW), 90-110 (LTLI…LVFH), 116-136 (LFNP…LIAA), 190-210 (YAAS…ATVL), 222-242 (ADIP…LIAI), and 252-272 (ISFI…YVVF).

The protein belongs to the UppP family.

It localises to the cell inner membrane. It carries out the reaction di-trans,octa-cis-undecaprenyl diphosphate + H2O = di-trans,octa-cis-undecaprenyl phosphate + phosphate + H(+). In terms of biological role, catalyzes the dephosphorylation of undecaprenyl diphosphate (UPP). Confers resistance to bacitracin. The chain is Undecaprenyl-diphosphatase from Salmonella heidelberg (strain SL476).